Consider the following 845-residue polypeptide: Beta-glucosidase (845 aa).

A glycan (N-linked (GlcNAc...) asparagine) is linked at N66. Residue D225 is part of the active site. Residues N304, N438, and N621 are each glycosylated (N-linked (GlcNAc...) asparagine). The 161-residue stretch at 408-568 (AENAGLIAKF…DDDEEIRNAA (161 aa)) folds into the PA14 domain.

Belongs to the glycosyl hydrolase 3 family. Homotetramer.

It carries out the reaction Hydrolysis of terminal, non-reducing beta-D-glucosyl residues with release of beta-D-glucose.. The protein operates within glycan metabolism; cellulose degradation. This is Beta-glucosidase from Kluyveromyces marxianus (Yeast).